Consider the following 130-residue polypeptide: Small ribosomal subunit protein uS11c (130 aa).

The protein belongs to the universal ribosomal protein uS11 family. In terms of assembly, part of the 30S ribosomal subunit.

The protein resides in the plastid. It localises to the chloroplast. The polypeptide is Small ribosomal subunit protein uS11c (Porphyra purpurea (Red seaweed)).